Here is an 83-residue protein sequence, read N- to C-terminus: Mu-theraphotoxin-Hhn2l (83 aa).

The signal sequence occupies residues 1 to 21 (MKASMFLALAGLVLLFVVGYA). Residues 22–48 (SESEEKEFPIELLSKIFAVDVFKGEER) constitute a propeptide that is removed on maturation. 3 disulfide bridges follow: Cys-50–Cys-65, Cys-57–Cys-70, and Cys-64–Cys-77. Leu-81 carries the leucine amide modification.

It belongs to the neurotoxin 10 (Hwtx-1) family. 15 (Hntx-3) subfamily. In terms of assembly, monomer. As to expression, expressed by the venom gland.

The protein resides in the secreted. Functionally, lethal neurotoxin. Selectively blocks tetrodotoxin-sensitive voltage-gated sodium channels (Nav). Does not affect tetrodotoxin-resistant voltage-gated sodium channels or calcium channels. This Cyriopagopus hainanus (Chinese bird spider) protein is Mu-theraphotoxin-Hhn2l.